The following is a 341-amino-acid chain: Ketol-acid reductoisomerase (NADP(+)) (341 aa).

Residues 1–182 (MTEMFYDDDA…GGTRAGVIKT (182 aa)) form the KARI N-terminal Rossmann domain. Residues 25 to 28 (YGSQ), K48, S51, S53, and 83 to 86 (DQHQ) each bind NADP(+). The active site involves H108. An NADP(+)-binding site is contributed by G134. A KARI C-terminal knotted domain is found at 183-328 (TFTEETETDL…RELRGLFSWQ (146 aa)). Residues D191, E195, E227, and E231 each contribute to the Mg(2+) site. Position 252 (S252) interacts with substrate.

This sequence belongs to the ketol-acid reductoisomerase family. It depends on Mg(2+) as a cofactor.

The catalysed reaction is (2R)-2,3-dihydroxy-3-methylbutanoate + NADP(+) = (2S)-2-acetolactate + NADPH + H(+). The enzyme catalyses (2R,3R)-2,3-dihydroxy-3-methylpentanoate + NADP(+) = (S)-2-ethyl-2-hydroxy-3-oxobutanoate + NADPH + H(+). It participates in amino-acid biosynthesis; L-isoleucine biosynthesis; L-isoleucine from 2-oxobutanoate: step 2/4. Its pathway is amino-acid biosynthesis; L-valine biosynthesis; L-valine from pyruvate: step 2/4. Involved in the biosynthesis of branched-chain amino acids (BCAA). Catalyzes an alkyl-migration followed by a ketol-acid reduction of (S)-2-acetolactate (S2AL) to yield (R)-2,3-dihydroxy-isovalerate. In the isomerase reaction, S2AL is rearranged via a Mg-dependent methyl migration to produce 3-hydroxy-3-methyl-2-ketobutyrate (HMKB). In the reductase reaction, this 2-ketoacid undergoes a metal-dependent reduction by NADPH to yield (R)-2,3-dihydroxy-isovalerate. This is Ketol-acid reductoisomerase (NADP(+)) from Arthrobacter sp. (strain FB24).